The chain runs to 496 residues: MGSMMAFAFSEIGLDVSIWDVKYDNVQQLLESAKNTNYKGKIEGFKDVSKFTQSLEGKAERKIFLFSITHGDPADSVLDMIKKDLKKGDIILDGGNENYRRTEARQKICEKIGVSWIGLGVSGGYQSARRGPSLSPGGDKEALDLVMPLLELYAGKDAKSGQPCVTRIGPKGSGHFVKMVHNGIEGGMLSTLAEAWSLLHYGRGMGYEEIADLFESWNKEGVLRNNYLLEIGAELLRVKKTPQGDGNGEGVGDGGFVLDDVLDKVVQDDDNTEGTPYWSVMESASRHISAPTLATAHFMRIASGNRIERLEVAKQLRIPSPSPIRGMKDIEAFKEHLHSAVYSSFLASFCQGLELIARASEDEGWDIDLGKCLQIWRSGCIIRSEGIADILQPAVSGNKGIKNMKYIDTVAQELHRTYPSLKEIVMAATDSDHYIPAISATLEYLKYEGGTNLPTKFMEAQMDFFGAHGYNLPGVPGEDPGPVSKGPHHYEWRPAK.

Residues 13 to 18, 24 to 26, 68 to 70, and Asn96 each bind NADP(+); these read GLDVSI, DNV, and ITH. Substrate is bound by residues Asn96 and 122-124; that span reads SGG. Lys178 acts as the Proton acceptor in catalysis. 181–182 is a substrate binding site; that stretch reads HN. The active-site Proton donor is Glu185. Substrate-binding residues include Arg300 and His468. Residues 476–496 are disordered; it reads PGEDPGPVSKGPHHYEWRPAK.

This sequence belongs to the 6-phosphogluconate dehydrogenase family. In terms of assembly, homodimer.

It is found in the cytoplasm. It carries out the reaction 6-phospho-D-gluconate + NADP(+) = D-ribulose 5-phosphate + CO2 + NADPH. Its pathway is carbohydrate degradation; pentose phosphate pathway; D-ribulose 5-phosphate from D-glucose 6-phosphate (oxidative stage): step 3/3. In terms of biological role, catalyzes the oxidative decarboxylation of 6-phosphogluconate to ribulose 5-phosphate and CO(2), with concomitant reduction of NADP to NADPH. The protein is 6-phosphogluconate dehydrogenase, decarboxylating of Emericella nidulans (strain FGSC A4 / ATCC 38163 / CBS 112.46 / NRRL 194 / M139) (Aspergillus nidulans).